The following is a 659-amino-acid chain: Siderophore transporter fer7 (659 aa).

The disordered stretch occupies residues 1-62; it reads MSNQAQDQPE…ADASSAREGQ (62 aa). Over residues 31–41 the composition is skewed to polar residues; sequence QSVSAHGNTSL. N-linked (GlcNAc...) asparagine glycosylation is present at N38. The segment covering 42 to 54 has biased composition (basic and acidic residues); it reads NKKDRVSAVRDAD. A run of 8 helical transmembrane segments spans residues 79 to 99, 121 to 141, 150 to 170, 208 to 228, 245 to 265, 316 to 336, 348 to 368, and 379 to 399; these read NSPIVYTVYASLAAVTICFAL, LFGVIATVEAILNAVSKPFIA, QTAYFLVAVFYTIGFVVVASA, GVVTALTSSPFIVLPWVGNLI, GMFAIMAPVCVAPIILVLMYV, LVGLFLLALSFSLLLVPFSIY, IIAMFVCGGVILGMFLAWEIL, and VWYNRTFLLAVTIDIFYFMGG. N-linked (GlcNAc...) asparagine glycosylation occurs at N415. Helical transmembrane passes span 424–444 and 451–471; these read VVNALATCALSVFGLAAGFYL and KFLQIGGLVIRIVAMGLYLYG. N-linked (GlcNAc...) asparagine glycosylation is present at N475. The next 3 helical transmembrane spans lie at 478-498, 528-548, and 590-610; these read TMVVAWSQILNSLGGACSVVG, AIGSAIAAGIWTGTLPDYLAA, and PIFIVALVLAFIPLFAGLLMP.

It belongs to the major facilitator superfamily.

The protein resides in the membrane. Siderophore transporter; part of the gene cluster that mediates the biosynthesis of siderophore ferrichrome A which is contributing to organismal virulence. This Mycosarcoma maydis (Corn smut fungus) protein is Siderophore transporter fer7.